Here is a 533-residue protein sequence, read N- to C-terminus: (E)-beta-farnesene synthase (533 aa).

Asp-286, Asp-290, Asn-430, Ser-434, and Glu-438 together coordinate Mg(2+). The DDXXD motif signature appears at Asp-286–Asp-290.

The protein belongs to the terpene synthase family. Mg(2+) serves as cofactor. It depends on Co(2+) as a cofactor. Requires Mn(2+) as cofactor.

The protein resides in the cytoplasm. The catalysed reaction is (2E,6E)-farnesyl diphosphate = (E)-beta-farnesene + diphosphate. Its pathway is secondary metabolite biosynthesis; terpenoid biosynthesis. Functionally, sesquiterpene cyclase catalyzing the production of sixfold more beta-farnesene than alpha-bergamotene from farnesyl diphosphate. Involved in indirect defense by producing volatile signals attracting natural enemies of herbivores. The chain is (E)-beta-farnesene synthase from Zea perennis (Perennial teosinte).